Consider the following 609-residue polypeptide: Dihydroxy-acid dehydratase (609 aa).

Residue Asp-81 participates in Mg(2+) binding. Cys-122 is a [2Fe-2S] cluster binding site. Positions 123 and 124 each coordinate Mg(2+). At Lys-124 the chain carries N6-carboxylysine. Cys-195 serves as a coordination point for [2Fe-2S] cluster. Glu-491 lines the Mg(2+) pocket. Ser-517 serves as the catalytic Proton acceptor.

This sequence belongs to the IlvD/Edd family. Homodimer. The cofactor is [2Fe-2S] cluster. Requires Mg(2+) as cofactor.

The enzyme catalyses (2R)-2,3-dihydroxy-3-methylbutanoate = 3-methyl-2-oxobutanoate + H2O. It catalyses the reaction (2R,3R)-2,3-dihydroxy-3-methylpentanoate = (S)-3-methyl-2-oxopentanoate + H2O. Its pathway is amino-acid biosynthesis; L-isoleucine biosynthesis; L-isoleucine from 2-oxobutanoate: step 3/4. It functions in the pathway amino-acid biosynthesis; L-valine biosynthesis; L-valine from pyruvate: step 3/4. In terms of biological role, functions in the biosynthesis of branched-chain amino acids. Catalyzes the dehydration of (2R,3R)-2,3-dihydroxy-3-methylpentanoate (2,3-dihydroxy-3-methylvalerate) into 2-oxo-3-methylpentanoate (2-oxo-3-methylvalerate) and of (2R)-2,3-dihydroxy-3-methylbutanoate (2,3-dihydroxyisovalerate) into 2-oxo-3-methylbutanoate (2-oxoisovalerate), the penultimate precursor to L-isoleucine and L-valine, respectively. This is Dihydroxy-acid dehydratase from Acinetobacter baumannii (strain ACICU).